Consider the following 546-residue polypeptide: NAD(P)H-quinone oxidoreductase chain 4 (546 aa).

Helical transmembrane passes span 24-44 (FPWL…IPFF), 56-76 (FALS…INGF), 108-128 (MPLI…AWPV), 132-152 (PKLF…VFAV), 156-176 (LLFF…LAIW), 188-208 (FIIY…AMGF), 232-252 (ILCY…VPLH), 263-283 (TAPV…YALL), 297-317 (FSPL…LTSF), 326-346 (IAYS…SFSS), 352-372 (AMLQ…LVGA), 396-416 (FALW…SGFV), 437-457 (VIMA…LLSM), and 484-504 (IYII…PRLV).

This sequence belongs to the complex I subunit 4 family.

It localises to the cellular thylakoid membrane. It carries out the reaction a plastoquinone + NADH + (n+1) H(+)(in) = a plastoquinol + NAD(+) + n H(+)(out). The catalysed reaction is a plastoquinone + NADPH + (n+1) H(+)(in) = a plastoquinol + NADP(+) + n H(+)(out). Functionally, NDH-1 shuttles electrons from NAD(P)H, via FMN and iron-sulfur (Fe-S) centers, to quinones in the respiratory chain. The immediate electron acceptor for the enzyme in this species is believed to be plastoquinone. Couples the redox reaction to proton translocation (for every two electrons transferred, four hydrogen ions are translocated across the cytoplasmic membrane), and thus conserves the redox energy in a proton gradient. This Prochlorococcus marinus subsp. pastoris (strain CCMP1986 / NIES-2087 / MED4) protein is NAD(P)H-quinone oxidoreductase chain 4.